The primary structure comprises 423 residues: Serine hydroxymethyltransferase (423 aa).

Residues L120 and 124 to 126 each bind (6S)-5,6,7,8-tetrahydrofolate; that span reads GHL. Residue K229 is modified to N6-(pyridoxal phosphate)lysine. (6S)-5,6,7,8-tetrahydrofolate is bound at residue 353 to 355; sequence SPF.

Belongs to the SHMT family. As to quaternary structure, homodimer. The cofactor is pyridoxal 5'-phosphate.

Its subcellular location is the cytoplasm. The catalysed reaction is (6R)-5,10-methylene-5,6,7,8-tetrahydrofolate + glycine + H2O = (6S)-5,6,7,8-tetrahydrofolate + L-serine. It functions in the pathway one-carbon metabolism; tetrahydrofolate interconversion. It participates in amino-acid biosynthesis; glycine biosynthesis; glycine from L-serine: step 1/1. Its function is as follows. Catalyzes the reversible interconversion of serine and glycine with tetrahydrofolate (THF) serving as the one-carbon carrier. This reaction serves as the major source of one-carbon groups required for the biosynthesis of purines, thymidylate, methionine, and other important biomolecules. Also exhibits THF-independent aldolase activity toward beta-hydroxyamino acids, producing glycine and aldehydes, via a retro-aldol mechanism. The polypeptide is Serine hydroxymethyltransferase (Prochlorococcus marinus subsp. pastoris (strain CCMP1986 / NIES-2087 / MED4)).